Reading from the N-terminus, the 489-residue chain is Lysine--tRNA ligase (489 aa).

Mg(2+) contacts are provided by E399 and E406.

Belongs to the class-II aminoacyl-tRNA synthetase family. As to quaternary structure, homodimer. Mg(2+) serves as cofactor.

The protein localises to the cytoplasm. The enzyme catalyses tRNA(Lys) + L-lysine + ATP = L-lysyl-tRNA(Lys) + AMP + diphosphate. The sequence is that of Lysine--tRNA ligase from Malacoplasma penetrans (strain HF-2) (Mycoplasma penetrans).